We begin with the raw amino-acid sequence, 254 residues long: Coenzyme F420:L-glutamate ligase (254 aa).

GTP is bound by residues 11–14 (IPLI), 40–41 (ST), and Lys45. Asp109 contacts a divalent metal cation. A GTP-binding site is contributed by Asn112. A divalent metal cation is bound by residues Asp150, Thr151, and Glu208. Residue 206–213 (MGEGAGGI) coordinates GTP.

This sequence belongs to the CofE family. In terms of assembly, homodimer. Mg(2+) is required as a cofactor. The cofactor is Mn(2+). It depends on K(+) as a cofactor.

It carries out the reaction oxidized coenzyme F420-0 + GTP + L-glutamate = oxidized coenzyme F420-1 + GDP + phosphate + H(+). The enzyme catalyses oxidized coenzyme F420-1 + GTP + L-glutamate = oxidized coenzyme F420-2 + GDP + phosphate + H(+). It functions in the pathway cofactor biosynthesis; coenzyme F420 biosynthesis. In terms of biological role, catalyzes the GTP-dependent successive addition of two or more gamma-linked L-glutamates to the L-lactyl phosphodiester of 7,8-didemethyl-8-hydroxy-5-deazariboflavin (F420-0) to form coenzyme F420-0-glutamyl-glutamate (F420-2) or polyglutamated F420 derivatives. The polypeptide is Coenzyme F420:L-glutamate ligase (Methanosarcina mazei (strain ATCC BAA-159 / DSM 3647 / Goe1 / Go1 / JCM 11833 / OCM 88) (Methanosarcina frisia)).